A 305-amino-acid polypeptide reads, in one-letter code: Achromobactin-binding periplasmic protein (305 aa).

A signal peptide spans 1-29 (MNEYLVSRRRLLRLSLSLLPLGLGRPALA). The region spanning 37–302 (RVITLFQGAT…DIARVTGIAG (266 aa)) is the Fe/B12 periplasmic-binding domain.

This sequence belongs to the bacterial solute-binding protein 8 family.

The protein localises to the periplasm. In terms of biological role, binds citrate- or chloride-dependent Fe(3+); part of the binding-protein-dependent transport system CbrABCD for uptake of the siderophore achromobactin. In Dickeya dadantii (strain 3937) (Erwinia chrysanthemi (strain 3937)), this protein is Achromobactin-binding periplasmic protein (cbrA).